Reading from the N-terminus, the 782-residue chain is Ribosome biogenesis protein ERB1 (782 aa).

Disordered regions lie at residues 1-123 and 339-361; these read MGSK…RIEK and PEEY…EDRE. Over residues 35–86 the composition is skewed to acidic residues; the sequence is SEDEEDYLPSDDDDDVEDSENEGTGASEDDDDDDDDDDILSDDIPSDVDSEE. Positions 105–123 are enriched in basic and acidic residues; the sequence is VDPKREEDDGADRNYRIEK. WD repeat units lie at residues 433–472, 476–516, 567–609, 612–650, 653–692, 696–736, and 752–782; these read GHEG…QVWS, NSEE…VTPA, TVRS…TQIP, KLSG…LVKV, PGAK…RPYK, FHGQ…DQLE, and VSKL…RLWM.

Belongs to the WD repeat BOP1/ERB1 family. As to quaternary structure, component of the NOP7 complex, composed of ERB1, NOP7 and YTM1. The complex is held together by ERB1, which interacts with NOP7 via its N-terminal domain and with YTM1 via a high-affinity interaction between the seven-bladed beta-propeller domains of the 2 proteins. The NOP7 complex associates with the 66S pre-ribosome.

It is found in the nucleus. It localises to the nucleolus. The protein resides in the nucleoplasm. Its function is as follows. Component of the NOP7 complex, which is required for maturation of the 25S and 5.8S ribosomal RNAs and formation of the 60S ribosome. The sequence is that of Ribosome biogenesis protein ERB1 from Chaetomium globosum (strain ATCC 6205 / CBS 148.51 / DSM 1962 / NBRC 6347 / NRRL 1970) (Soil fungus).